Reading from the N-terminus, the 267-residue chain is Endonuclease NucS (267 aa).

Belongs to the NucS endonuclease family.

The protein resides in the cytoplasm. In terms of biological role, cleaves both 3' and 5' ssDNA extremities of branched DNA structures. The protein is Endonuclease NucS of Pyrococcus furiosus (strain ATCC 43587 / DSM 3638 / JCM 8422 / Vc1).